Here is a 318-residue protein sequence, read N- to C-terminus: Elongation factor Ts, mitochondrial (318 aa).

Residues 1–18 constitute a mitochondrion transit peptide; it reads MLLQRFFTRALHSTRQLY.

The protein belongs to the EF-Ts family.

The protein resides in the mitochondrion. Functionally, associates with the EF-Tu.GDP complex and induces the exchange of GDP to GTP. It remains bound to the aminoacyl-tRNA.EF-Tu.GTP complex up to the GTP hydrolysis stage on the ribosome. This is Elongation factor Ts, mitochondrial from Drosophila melanogaster (Fruit fly).